The following is a 273-amino-acid chain: Undecaprenyl-diphosphatase (273 aa).

The next 8 membrane-spanning stretches (helical) occupy residues 4-24 (IELL…WLPI), 45-65 (FMSM…VVLF), 84-104 (TFTL…MIPF), 112-132 (FFNP…FIII), 149-169 (ITYQ…IPGT), 187-207 (YVAA…ASLL), 219-239 (AEIV…IIVI), and 251-271 (FKVF…YFLL).

It belongs to the UppP family.

It is found in the cell membrane. The enzyme catalyses di-trans,octa-cis-undecaprenyl diphosphate + H2O = di-trans,octa-cis-undecaprenyl phosphate + phosphate + H(+). Catalyzes the dephosphorylation of undecaprenyl diphosphate (UPP). Confers resistance to bacitracin. This is Undecaprenyl-diphosphatase from Lachnoclostridium phytofermentans (strain ATCC 700394 / DSM 18823 / ISDg) (Clostridium phytofermentans).